Consider the following 752-residue polypeptide: Cation-transporting P-type ATPase B (752 aa).

The region spanning Arg15–Ala78 is the HMA domain. 2 residues coordinate a metal cation: Cys26 and Cys29. Transmembrane regions (helical) follow at residues Leu105–Val125, Gly132–Phe152, Met167–Phe187, Ala201–Leu221, Ile361–Leu381, and Ala390–Thr410. Asp446 acts as the 4-aspartylphosphate intermediate in catalysis. Helical transmembrane passes span Met491–Val511 and Ala714–Phe734.

Belongs to the cation transport ATPase (P-type) (TC 3.A.3) family. Type IB subfamily.

It localises to the cell membrane. The catalysed reaction is ATP + H2O = ADP + phosphate + H(+). The sequence is that of Cation-transporting P-type ATPase B (ctpB) from Mycobacterium tuberculosis (strain ATCC 25618 / H37Rv).